The sequence spans 570 residues: MIPPEIRRSVLLQKAIKLALAGTLLTFASFSATAADPSSDTETPQPPDILLGPLFNDVQNAKLLPDQKTFADAIPNSDPLMILADYRMQRNQSGFDLRHFVDVNFTLPKAGEKYVPPAGQSLREHIDGLWPVLTRSTKNVKKWDSLLPLPESYVVPGGRFREIYYWDSYFTMLGLAESGHWDKVADMVANFGYEIDAWGHIPNGNRTYYLSRSQPPFFAFMVELLAQHEGDDALKEYLPQLQKEYAYWMEGVETLQPGQQNQRVVKLEDGSVLNRYWDDRDTPRPESWVEDIATAKSNPNRPATEIYRDLRSAAASGWDFSSRWMDNPQQLSTIRTTTIVPVDLNALLYQLEKTLARASAAAGDRAKASQYDALANARQKAIEMHLWNNKEGWYADYDLQNNKIRDQLTAAALFPLYVNAAAKDRAAKVAAAAQAHQLQPGGLATTSVKSGQQWDAPNGWAPLQWVAAEGLQNYGQDDVAMEVTWRFLTNVQHTYDREKKLVEKYDVSSTGTGGGGGEYPLQDGFGWTNGVTLKMLDLICPQEKPCDSVPSTRPASLSATPTKTPSAATQ.

The first 34 residues, 1 to 34 (MIPPEIRRSVLLQKAIKLALAGTLLTFASFSATA), serve as a signal peptide directing secretion. Substrate is bound by residues R159, 166-167 (WD), N203, 212-214 (RSQ), 284-286 (RPE), and G317. Catalysis depends on proton donor/acceptor residues D319 and E503. Residue E518 coordinates substrate. The interval 544 to 570 (KPCDSVPSTRPASLSATPTKTPSAATQ) is disordered. The span at 554–570 (PASLSATPTKTPSAATQ) shows a compositional bias: low complexity.

This sequence belongs to the glycosyl hydrolase 37 family. As to quaternary structure, monomer.

It is found in the periplasm. The catalysed reaction is alpha,alpha-trehalose + H2O = alpha-D-glucose + beta-D-glucose. Functionally, provides the cells with the ability to utilize trehalose at high osmolarity by splitting it into glucose molecules that can subsequently be taken up by the phosphotransferase-mediated uptake system. This is Periplasmic trehalase from Salmonella choleraesuis (strain SC-B67).